The sequence spans 413 residues: 3-isopropylmalate dehydratase large subunit (413 aa).

Residues Cys-293, Cys-353, and Cys-356 each coordinate [4Fe-4S] cluster.

This sequence belongs to the aconitase/IPM isomerase family. LeuC type 2 subfamily. In terms of assembly, heterodimer of LeuC and LeuD. [4Fe-4S] cluster is required as a cofactor.

The catalysed reaction is (2R,3S)-3-isopropylmalate = (2S)-2-isopropylmalate. It participates in amino-acid biosynthesis; L-leucine biosynthesis; L-leucine from 3-methyl-2-oxobutanoate: step 2/4. In terms of biological role, catalyzes the isomerization between 2-isopropylmalate and 3-isopropylmalate, via the formation of 2-isopropylmaleate. The protein is 3-isopropylmalate dehydratase large subunit of Picrophilus torridus (strain ATCC 700027 / DSM 9790 / JCM 10055 / NBRC 100828 / KAW 2/3).